The chain runs to 519 residues: Sorting nexin-2 (519 aa).

Disordered stretches follow at residues 1 to 20 (MAAEREPPPLGDGKPTDFEE) and 30 to 103 (STVS…VTPV). Low complexity-rich tracts occupy residues 30–44 (STVSTLESSPSSPDP) and 93–103 (SSETSPAVTPV). Ser97 carries the post-translational modification Phosphoserine. Residues Thr101 and Thr104 each carry the phosphothreonine modification. 2 positions are modified to phosphoserine: Ser117 and Ser119. A PX domain is found at 140 to 269 (FDIEIGVSDP…QFLESSELPR (130 aa)). A 1,2-diacyl-sn-glycero-3-phospho-(1D-myo-inositol-3-phosphate) is bound by residues Arg183, Ser185, Lys211, and Arg235. The residue at position 185 (Ser185) is a Phosphoserine. The tract at residues 260-519 (QFLESSELPR…AFLPEAKAIA (260 aa)) is interaction with RhoG. Phosphoserine is present on Ser277. Residues 278–295 (GAGILRMVNKAADAVNKM) are membrane-binding amphipathic helix. The region spanning 299–519 (MNESDAWFEE…AFLPEAKAIA (221 aa)) is the BAR domain. An N6-acetyllysine modification is found at Lys469.

It belongs to the sorting nexin family. In terms of assembly, predominantly forms heterodimers with BAR domain-containing sorting nexins SNX5, SNX6 and SNX32; can self-associate to form homodimers. The heterodimers are proposed to self-assemble into helical arrays on the membrane to stabilize and expand local membrane curvature underlying endosomal tubule formation. Thought to be a component of the originally described retromer complex (also called SNX-BAR retromer) which is a pentamer containing the heterotrimeric retromer cargo-selective complex (CSC), also decribed as vacuolar protein sorting subcomplex (VPS) and a heterodimeric membrane-deforming subcomplex formed between SNX1 or SNX2 and SNX5 or SNX6 (also called SNX-BAR subcomplex); the respective CSC and SNX-BAR subcomplexes associate with low affinity. Interacts with SNX5, SNX6, SNX32, VPS26A, VPS29, VPS35, FNBP1, KALRN, RHOG (GDP-bound form).

The protein resides in the early endosome membrane. Its subcellular location is the cell projection. It localises to the lamellipodium. Its function is as follows. Involved in several stages of intracellular trafficking. Interacts with membranes containing phosphatidylinositol 3-phosphate (PtdIns(3P)) or phosphatidylinositol 3,5-bisphosphate (PtdIns(3,5)P2). Acts in part as component of the retromer membrane-deforming SNX-BAR subcomplex. The SNX-BAR retromer mediates retrograde transport of cargo proteins from endosomes to the trans-Golgi network (TGN) and is involved in endosome-to-plasma membrane transport for cargo protein recycling. The SNX-BAR subcomplex functions to deform the donor membrane into a tubular profile called endosome-to-TGN transport carrier (ETC). Can sense membrane curvature and has in vitro vesicle-to-membrane remodeling activity. Required for retrograde endosome-to-TGN transport of TGN38. Promotes KALRN- and RHOG-dependent but retromer-independent membrane remodeling such as lamellipodium formation; the function is dependent on GEF activity of KALRN. This chain is Sorting nexin-2 (SNX2), found in Bos taurus (Bovine).